Consider the following 152-residue polypeptide: uncharacterized protein (152 aa).

The signal sequence occupies residues 1-16 (MRKLLISLALAIPVFA). Residues 20–135 (NLLQKGYEVY…AVAYWLYHNY (116 aa)) form the Cytochrome c domain. Heme c contacts are provided by C33, C36, and H37.

This is an uncharacterized protein from Aquifex aeolicus (strain VF5).